The following is a 300-amino-acid chain: tRNA pseudouridine synthase A (300 aa).

Residue D67 is the Nucleophile of the active site. Residue Y125 participates in substrate binding.

This sequence belongs to the tRNA pseudouridine synthase TruA family. As to quaternary structure, homodimer.

It carries out the reaction uridine(38/39/40) in tRNA = pseudouridine(38/39/40) in tRNA. Functionally, formation of pseudouridine at positions 38, 39 and 40 in the anticodon stem and loop of transfer RNAs. This is tRNA pseudouridine synthase A from Synechococcus sp. (strain CC9902).